Here is a 425-residue protein sequence, read N- to C-terminus: MKAFLVGGAVRDRLLGLPVRERDWVVVGESPETMIARGFRPVGRDFPVFLHPETHEEYALARTERKTAPGYRGFVVHAAPDVTLEQDLERRDLTINAMAETPDGRLVDPFGGRRDLEARLLRHVSSAFAEDPVRILRVARFTARLTPLGFRVAPETLVEMRRMVEAGEVDALVPERVWAEFAKALAEPAPSAFFRTLRDCGALKRLFPEIERLFGVPQPPRHHPEIDTGVHTLMVLDQAARLTADPSARFAALTHDLGKALTPPELWPSHRGHERLGLGALNTLCDRFRAPNAFRRLAEKVMRYHGLCHRAAELRTSTLVDLLDRLGALKRHDDTLEPFLLACEADARGRAGFEERPYPQADWLREAQRAAVSVDSRPLIEQRLQGPAFGRALRQLRIAAVRRLRAARSPATPAGRLPHPQGEGE.

Glycine 8 and arginine 11 together coordinate ATP. Glycine 8 and arginine 11 together coordinate CTP. Mg(2+) is bound by residues glutamate 21 and aspartate 23. ATP-binding residues include arginine 91, arginine 137, and arginine 140. CTP is bound by residues arginine 91, arginine 137, and arginine 140. Residues 228–329 (TGVHTLMVLD…VDLLDRLGAL (102 aa)) form the HD domain.

The protein belongs to the tRNA nucleotidyltransferase/poly(A) polymerase family. Bacterial CCA-adding enzyme type 1 subfamily. Monomer. Can also form homodimers and oligomers. Mg(2+) serves as cofactor. It depends on Ni(2+) as a cofactor.

The catalysed reaction is a tRNA precursor + 2 CTP + ATP = a tRNA with a 3' CCA end + 3 diphosphate. It carries out the reaction a tRNA with a 3' CCA end + 2 CTP + ATP = a tRNA with a 3' CCACCA end + 3 diphosphate. Its function is as follows. Catalyzes the addition and repair of the essential 3'-terminal CCA sequence in tRNAs without using a nucleic acid template. Adds these three nucleotides in the order of C, C, and A to the tRNA nucleotide-73, using CTP and ATP as substrates and producing inorganic pyrophosphate. tRNA 3'-terminal CCA addition is required both for tRNA processing and repair. Also involved in tRNA surveillance by mediating tandem CCA addition to generate a CCACCA at the 3' terminus of unstable tRNAs. While stable tRNAs receive only 3'-terminal CCA, unstable tRNAs are marked with CCACCA and rapidly degraded. This chain is Multifunctional CCA protein, found in Methylococcus capsulatus (strain ATCC 33009 / NCIMB 11132 / Bath).